The primary structure comprises 1362 residues: DNA-directed RNA polymerase subunit beta (1362 aa).

The protein belongs to the RNA polymerase beta chain family. In terms of assembly, the RNAP catalytic core consists of 2 alpha, 1 beta, 1 beta' and 1 omega subunit. When a sigma factor is associated with the core the holoenzyme is formed, which can initiate transcription.

The catalysed reaction is RNA(n) + a ribonucleoside 5'-triphosphate = RNA(n+1) + diphosphate. Its function is as follows. DNA-dependent RNA polymerase catalyzes the transcription of DNA into RNA using the four ribonucleoside triphosphates as substrates. This Parvibaculum lavamentivorans (strain DS-1 / DSM 13023 / NCIMB 13966) protein is DNA-directed RNA polymerase subunit beta.